The following is a 645-amino-acid chain: MARDIQLPCDGDGVCMRCKSNPPPEESLTCGTCVTPWHVSCLSSPPKTLASTLQWHCPDCSGEIDPLPVSGGATGFESAGSDLVAAIRAIEADESLSTEEKAKMRQRLLSGKGVEEDDEEEKRKKKGKGKNPNLDVLSALGDNLMCSFCMQLPERPVTKPCGHNACLKCFEKWMGQGKRTCGKCRSIIPEKMAKNPRINSSLVAAIRLAKVSKSAAATTSKVFHFISNQDRPDKAFTTERAKKTGKANAASGKIYVTIPPDHFGPIPAENDPVRNQGLLVGESWEDRLECRQWGAHFPHVAGIAGQSTYGAQSVALSGGYKDDEDHGEWFLYTGSGGRDLSGNKRTNKEQSFDQKFEKSNAALKLSCKLGYPVRVVRSHKEKRSAYAPEEGVRYDGVYRIEKCWRKVGVQGSFKVCRYLFVRCDNEPAPWTSDENGDRPRPIPNIPELNMATDLFERKETPSWDFDEGEGCWKWMKPPPASKKSVNVLAPEERKNLRKAIKAAHSNTMRARLLKEFKCQICQQVLTLPVTTPCAHNFCKACLEAKFAGKTLVRERSTGGRTLRSRKNVLNCPCCPTDISDFLQNPQVNREVAEVIEKLKTQEEDTAELEDEDEGECSGTTPEEDSEQPKKRIKLDTDATVSATIR.

The PHD-type zinc finger occupies Asp12–Glu63. Residues Leu96 to Asn133 form a disordered region. An RING-type 1 zinc finger spans residues Cys146–Arg185. Positions Val273–Arg422 constitute a YDG domain. The RING-type 2 zinc finger occupies Cys518–Pro575. Residues Gln583–Glu613 are a coiled coil. The interval Lys599–Arg645 is disordered. The span at Glu603–Ser625 shows a compositional bias: acidic residues. Residues Glu626–Thr636 show a composition bias toward basic and acidic residues.

In terms of assembly, interacts with histones CENH3, HTB2, HTR3 and H4. In terms of tissue distribution, mostly expressed in inflorescence and, to a lower extent, in leaves.

The protein resides in the nucleus. The catalysed reaction is S-ubiquitinyl-[E2 ubiquitin-conjugating enzyme]-L-cysteine + [acceptor protein]-L-lysine = [E2 ubiquitin-conjugating enzyme]-L-cysteine + N(6)-ubiquitinyl-[acceptor protein]-L-lysine.. Its pathway is protein modification; protein ubiquitination. Functionally, E3 ubiquitin-protein ligase. Participates in CpG methylation-dependent transcriptional regulation and epigenetic transcriptional silencing. Mediates ubiquitination with the E2 ubiquitin-conjugating enzyme UBC11. Promotes methylation-mediated gene silencing leading, for example, to early flowering. Associates with methylated DNA, and can bind to CpG, CpNpG, and CpNpN DNA motifs, with a strong preference for methylated forms, and with highest affinity for CpG substrate. Probably acts at the DNA methylation?histone interface to maintain centromeric heterochromatin. This Arabidopsis thaliana (Mouse-ear cress) protein is E3 ubiquitin-protein ligase ORTHRUS 2 (ORTH2).